Reading from the N-terminus, the 411-residue chain is Actin-like protein 9 (411 aa).

Basic and acidic residues predominate over residues 1–15; sequence MDVNGPKRWEPHRSL. The interval 1–23 is disordered; it reads MDVNGPKRWEPHRSLDLNPRSTP.

The protein belongs to the actin family. As to quaternary structure, interacts with ACTL7A.

The protein localises to the cytoplasmic vesicle. It localises to the secretory vesicle. It is found in the acrosome. The protein resides in the cytoplasm. Its subcellular location is the cytoskeleton. The protein localises to the perinuclear theca. Functionally, testis-specic protein that plays an important role in fusion of proacrosomal vesicles and perinuclear theca formation. This is Actin-like protein 9 (Actl9) from Rattus norvegicus (Rat).